A 363-amino-acid polypeptide reads, in one-letter code: Holliday junction branch migration complex subunit RuvB (363 aa).

Positions methionine 1–leucine 23 are disordered. Residues methionine 1–tyrosine 184 are large ATPase domain (RuvB-L). ATP-binding positions include leucine 23, arginine 24, glycine 65, lysine 68, threonine 69, threonine 70, glutamate 131–tyrosine 133, arginine 174, tyrosine 184, and arginine 221. Mg(2+) is bound at residue threonine 69. The tract at residues threonine 185–glutamate 255 is small ATPAse domain (RuvB-S). A head domain (RuvB-H) region spans residues histidine 258–aspartate 363. DNA contacts are provided by arginine 294, arginine 313, and arginine 318.

Belongs to the RuvB family. Homohexamer. Forms an RuvA(8)-RuvB(12)-Holliday junction (HJ) complex. HJ DNA is sandwiched between 2 RuvA tetramers; dsDNA enters through RuvA and exits via RuvB. An RuvB hexamer assembles on each DNA strand where it exits the tetramer. Each RuvB hexamer is contacted by two RuvA subunits (via domain III) on 2 adjacent RuvB subunits; this complex drives branch migration. In the full resolvosome a probable DNA-RuvA(4)-RuvB(12)-RuvC(2) complex forms which resolves the HJ.

It localises to the cytoplasm. It carries out the reaction ATP + H2O = ADP + phosphate + H(+). Its function is as follows. The RuvA-RuvB-RuvC complex processes Holliday junction (HJ) DNA during genetic recombination and DNA repair, while the RuvA-RuvB complex plays an important role in the rescue of blocked DNA replication forks via replication fork reversal (RFR). RuvA specifically binds to HJ cruciform DNA, conferring on it an open structure. The RuvB hexamer acts as an ATP-dependent pump, pulling dsDNA into and through the RuvAB complex. RuvB forms 2 homohexamers on either side of HJ DNA bound by 1 or 2 RuvA tetramers; 4 subunits per hexamer contact DNA at a time. Coordinated motions by a converter formed by DNA-disengaged RuvB subunits stimulates ATP hydrolysis and nucleotide exchange. Immobilization of the converter enables RuvB to convert the ATP-contained energy into a lever motion, pulling 2 nucleotides of DNA out of the RuvA tetramer per ATP hydrolyzed, thus driving DNA branch migration. The RuvB motors rotate together with the DNA substrate, which together with the progressing nucleotide cycle form the mechanistic basis for DNA recombination by continuous HJ branch migration. Branch migration allows RuvC to scan DNA until it finds its consensus sequence, where it cleaves and resolves cruciform DNA. The protein is Holliday junction branch migration complex subunit RuvB of Bartonella tribocorum (strain CIP 105476 / IBS 506).